Reading from the N-terminus, the 1037-residue chain is Mediator of RNA polymerase II transcription subunit 14 (1037 aa).

It belongs to the Mediator complex subunit 14 family. Component of the Mediator complex.

It is found in the nucleus. Its function is as follows. Component of the Mediator complex, a coactivator involved in the regulated transcription of nearly all RNA polymerase II-dependent genes. Mediator functions as a bridge to convey information from gene-specific regulatory proteins to the basal RNA polymerase II transcription machinery. Mediator is recruited to promoters by direct interactions with regulatory proteins and serves as a scaffold for the assembly of a functional preinitiation complex with RNA polymerase II and the general transcription factors. This chain is Mediator of RNA polymerase II transcription subunit 14 (RGR1), found in Candida glabrata (strain ATCC 2001 / BCRC 20586 / JCM 3761 / NBRC 0622 / NRRL Y-65 / CBS 138) (Yeast).